Consider the following 180-residue polypeptide: UPF0227 protein PC1_2487 (180 aa).

This sequence belongs to the UPF0227 family.

In Pectobacterium carotovorum subsp. carotovorum (strain PC1), this protein is UPF0227 protein PC1_2487.